Consider the following 250-residue polypeptide: Leucyl/phenylalanyl-tRNA--protein transferase (250 aa).

This sequence belongs to the L/F-transferase family.

The protein resides in the cytoplasm. It catalyses the reaction N-terminal L-lysyl-[protein] + L-leucyl-tRNA(Leu) = N-terminal L-leucyl-L-lysyl-[protein] + tRNA(Leu) + H(+). It carries out the reaction N-terminal L-arginyl-[protein] + L-leucyl-tRNA(Leu) = N-terminal L-leucyl-L-arginyl-[protein] + tRNA(Leu) + H(+). The catalysed reaction is L-phenylalanyl-tRNA(Phe) + an N-terminal L-alpha-aminoacyl-[protein] = an N-terminal L-phenylalanyl-L-alpha-aminoacyl-[protein] + tRNA(Phe). Functionally, functions in the N-end rule pathway of protein degradation where it conjugates Leu, Phe and, less efficiently, Met from aminoacyl-tRNAs to the N-termini of proteins containing an N-terminal arginine or lysine. The polypeptide is Leucyl/phenylalanyl-tRNA--protein transferase (Cupriavidus taiwanensis (strain DSM 17343 / BCRC 17206 / CCUG 44338 / CIP 107171 / LMG 19424 / R1) (Ralstonia taiwanensis (strain LMG 19424))).